Reading from the N-terminus, the 232-residue chain is Pyridoxal 5'-phosphate synthase subunit PdxS (232 aa).

Lys-23 acts as the Schiff-base intermediate with D-ribose 5-phosphate in catalysis. Gly-95 is a binding site for D-ribose 5-phosphate. A D-glyceraldehyde 3-phosphate-binding site is contributed by Arg-107. Residues Gly-156 and 177-178 (GS) each bind D-ribose 5-phosphate.

It belongs to the PdxS/SNZ family. In the presence of PdxT, forms a dodecamer of heterodimers.

The catalysed reaction is aldehydo-D-ribose 5-phosphate + D-glyceraldehyde 3-phosphate + L-glutamine = pyridoxal 5'-phosphate + L-glutamate + phosphate + 3 H2O + H(+). Its pathway is cofactor biosynthesis; pyridoxal 5'-phosphate biosynthesis. Catalyzes the formation of pyridoxal 5'-phosphate from ribose 5-phosphate (RBP), glyceraldehyde 3-phosphate (G3P) and ammonia. The ammonia is provided by the PdxT subunit. Can also use ribulose 5-phosphate and dihydroxyacetone phosphate as substrates, resulting from enzyme-catalyzed isomerization of RBP and G3P, respectively. This Clostridium novyi protein is Pyridoxal 5'-phosphate synthase subunit PdxS.